We begin with the raw amino-acid sequence, 367 residues long: Glutamate 5-kinase (367 aa).

K8 provides a ligand contact to ATP. 3 residues coordinate substrate: S49, D136, and N148. ATP contacts are provided by residues T168–D169 and T210–K216. The 79-residue stretch at A275–A353 folds into the PUA domain.

This sequence belongs to the glutamate 5-kinase family.

It localises to the cytoplasm. The enzyme catalyses L-glutamate + ATP = L-glutamyl 5-phosphate + ADP. Its pathway is amino-acid biosynthesis; L-proline biosynthesis; L-glutamate 5-semialdehyde from L-glutamate: step 1/2. In terms of biological role, catalyzes the transfer of a phosphate group to glutamate to form L-glutamate 5-phosphate. This is Glutamate 5-kinase from Nostoc punctiforme (strain ATCC 29133 / PCC 73102).